Here is a 1529-residue protein sequence, read N- to C-terminus: ABC multidrug transporter AFR2 (1529 aa).

Positions 1–10 (MAFAGVGQGL) are enriched in gly residues. Positions 1–21 (MAFAGVGQGLGTYDRTEQTSG) are disordered. In terms of domain architecture, ABC transporter 1 spans 144-394 (GALRDLISNR…FVDMGFHCPS (251 aa)). N-linked (GlcNAc...) asparagine glycans are attached at residues N235 and N318. The next 5 membrane-spanning stretches (helical) occupy residues 505–525 (LTLT…SVFY), 539–559 (ALLF…ILIL), 589–609 (IPYK…MTNL), 614–634 (GPYF…SMLF), and 648–668 (LAPA…AVNV). A glycan (N-linked (GlcNAc...) asparagine) is linked at N742. The helical transmembrane segment at 757-777 (GILIGFFLFFTAIYMTATEFI) threads the bilayer. The 243-residue stretch at 845–1087 (FSWKDVVYDI…ILIDYFEKNG (243 aa)) folds into the ABC transporter 2 domain. ATP is bound at residue 881–888 (GVSGAGKT). A run of 5 helical transmembrane segments spans residues 1193 to 1213 (YIWS…FSFF), 1227 to 1247 (FSVF…MPNF), 1268 to 1288 (IFIL…GAVI), 1314 to 1334 (LMFL…IMIV), and 1353 to 1373 (MCLI…FWMF). N1434 carries an N-linked (GlcNAc...) asparagine glycan. Residues 1465 to 1485 (FGLLWAYVVFNIIAAVGIYWL) traverse the membrane as a helical segment. The segment at 1493–1529 (GKEQASEPEGVQEKLVPAQSSEKKRESVSRGSESTAA) is disordered.

This sequence belongs to the ABC transporter superfamily. ABCG family. PDR (TC 3.A.1.205) subfamily.

The protein resides in the cell membrane. The enzyme catalyses itraconazole(in) + ATP + H2O = itraconazole(out) + ADP + phosphate + H(+). It carries out the reaction voriconazole(in) + ATP + H2O = voriconazole(out) + ADP + phosphate + H(+). It catalyses the reaction fluconazole(in) + ATP + H2O = fluconazole(out) + ADP + phosphate + H(+). In terms of biological role, pleiotropic ABC efflux transporter that confers resistance to structurally and functionally unrelated compounds including azoles such as fluconazole (FLC), itraconazole (ITC), posaconazole (POS), and voriconazole (VRC). This is ABC multidrug transporter AFR2 from Cryptococcus neoformans var. grubii serotype A (strain H99 / ATCC 208821 / CBS 10515 / FGSC 9487) (Filobasidiella neoformans var. grubii).